A 226-amino-acid chain; its full sequence is MADSRPDPESEPDSVFPREVGLFADCYSEKSRFCFCGHVLNITENFGSRLGVAARVWDAALSLCNYFESQNVDFRGKKVIELGAGTGIVGILAALQGGDVTITDLPLVLEQIQGNVQANVPPGGRAQVRALSWGIDQHVFPGDYDLVLGADIVYLEPTFPLLLGTLRHLCGPHGTIYLASKMREEHGTESFFQHLLPQHFQLELAQRDEDENVNIYRARHRGPRPA.

Residues W57, G83–G85, D104, W133, and A150 each bind S-adenosyl-L-methionine.

The protein belongs to the methyltransferase superfamily. METTL21 family. In terms of assembly, interacts with members of the heat shock protein 70 and 90 families and of the TCP-1 chaperonin family, as well as with HSPD1, STIP1 and tubulin; at least some of these proteins may be methylation substrates.

The protein resides in the cytoplasm. It localises to the cytoskeleton. Its subcellular location is the microtubule organizing center. It is found in the centrosome. The enzyme catalyses L-lysyl-[protein] + 3 S-adenosyl-L-methionine = N(6),N(6),N(6)-trimethyl-L-lysyl-[protein] + 3 S-adenosyl-L-homocysteine + 3 H(+). It catalyses the reaction L-lysyl-[protein] + S-adenosyl-L-methionine = N(6)-methyl-L-lysyl-[protein] + S-adenosyl-L-homocysteine + H(+). It carries out the reaction N(6)-methyl-L-lysyl-[protein] + S-adenosyl-L-methionine = N(6),N(6)-dimethyl-L-lysyl-[protein] + S-adenosyl-L-homocysteine + H(+). The catalysed reaction is N(6),N(6)-dimethyl-L-lysyl-[protein] + S-adenosyl-L-methionine = N(6),N(6),N(6)-trimethyl-L-lysyl-[protein] + S-adenosyl-L-homocysteine + H(+). Functionally, protein-lysine methyltransferase that selectively mono-, di- and trimethylates 'Lys-165' of the translation elongation factors EEF1A1 and EEF1A2 in an aminoacyl-tRNA and GTP-dependent manner. EEF1A1 methylation by EEF1AKMT3 is dynamic as well as inducible by stress conditions, such as ER-stress, and plays a regulatory role on mRNA translation. This chain is EEF1A lysine methyltransferase 3, found in Bos taurus (Bovine).